We begin with the raw amino-acid sequence, 263 residues long: 4-hydroxy-tetrahydrodipicolinate reductase (263 aa).

10-15 (GASGKM) is a binding site for NAD(+). NADP(+) is bound at residue arginine 38. NAD(+) contacts are provided by residues 97 to 99 (GTT) and 123 to 126 (APNF). Histidine 153 functions as the Proton donor/acceptor in the catalytic mechanism. Histidine 154 serves as a coordination point for (S)-2,3,4,5-tetrahydrodipicolinate. The active-site Proton donor is lysine 157. A (S)-2,3,4,5-tetrahydrodipicolinate-binding site is contributed by 163–164 (GT).

The protein belongs to the DapB family.

It is found in the cytoplasm. It carries out the reaction (S)-2,3,4,5-tetrahydrodipicolinate + NAD(+) + H2O = (2S,4S)-4-hydroxy-2,3,4,5-tetrahydrodipicolinate + NADH + H(+). The enzyme catalyses (S)-2,3,4,5-tetrahydrodipicolinate + NADP(+) + H2O = (2S,4S)-4-hydroxy-2,3,4,5-tetrahydrodipicolinate + NADPH + H(+). The protein operates within amino-acid biosynthesis; L-lysine biosynthesis via DAP pathway; (S)-tetrahydrodipicolinate from L-aspartate: step 4/4. In terms of biological role, catalyzes the conversion of 4-hydroxy-tetrahydrodipicolinate (HTPA) to tetrahydrodipicolinate. The sequence is that of 4-hydroxy-tetrahydrodipicolinate reductase from Dehalococcoides mccartyi (strain ATCC BAA-2100 / JCM 16839 / KCTC 5957 / BAV1).